The primary structure comprises 200 residues: Shikimate kinase (200 aa).

Position 41–46 (41–46 (GVGKSS)) interacts with ATP. Ser-45 serves as a coordination point for Mg(2+). 3 residues coordinate substrate: Asp-63, Arg-87, and Gly-109. Arg-147 lines the ATP pocket. Arg-166 serves as a coordination point for substrate.

Belongs to the shikimate kinase family. Monomer. Requires Mg(2+) as cofactor.

Its subcellular location is the cytoplasm. It catalyses the reaction shikimate + ATP = 3-phosphoshikimate + ADP + H(+). Its pathway is metabolic intermediate biosynthesis; chorismate biosynthesis; chorismate from D-erythrose 4-phosphate and phosphoenolpyruvate: step 5/7. In terms of biological role, catalyzes the specific phosphorylation of the 3-hydroxyl group of shikimic acid using ATP as a cosubstrate. This is Shikimate kinase from Caulobacter vibrioides (strain NA1000 / CB15N) (Caulobacter crescentus).